The primary structure comprises 410 residues: Sprouty-related, EVH1 domain-containing protein 3 (410 aa).

A WH1 domain is found at 1–113 (MVRVRAVVMA…KSLLAALAAL (113 aa)). Residues 117 to 210 (SLTPSSSSSS…PEPSEPLAGA (94 aa)) form a disordered region. Composition is skewed to low complexity over residues 120 to 130 (PSSSSSSSSPS) and 147 to 165 (DSSS…AAAP). Residues 195 to 244 (LPFTGIPEPSEPLAGAGGLGWGGRGYEDYRRSGPPAPLALSTCVVRFAKT) enclose the KBD domain. The residue at position 240 (R240) is an Asymmetric dimethylarginine. R248 is modified (omega-N-methylarginine). The segment at 258-288 (LPAPLTEAAPPAPPARPPPGPGPSSAPAKAS) is disordered. Positions 267–281 (PPAPPARPPPGPGPS) are enriched in pro residues. One can recognise an SPR domain in the interval 296–407 (RCVHCRALFR…CAGCGGRHEE (112 aa)).

Interacts with palmitoyltransferase ZDHHC17/HIP14; the interaction leads to palmitoylation of SPRED3. Phosphorylated on tyrosine. In terms of processing, palmitoylated by ZDHHC17/HIP14. Post-translationally, ubiquitinated.

The protein resides in the cell membrane. Its function is as follows. Tyrosine kinase substrate that inhibits growth-factor-mediated activation of MAP kinase. Inhibits fibroblast growth factor (FGF)-induced retinal lens fiber differentiation, probably by inhibiting FGF-mediated phosphorylation of ERK1/2. Inhibits TGFB-induced epithelial-to-mesenchymal transition in lens epithelial cells. This Homo sapiens (Human) protein is Sprouty-related, EVH1 domain-containing protein 3 (SPRED3).